The sequence spans 169 residues: Sulfopyruvate decarboxylase subunit alpha (169 aa).

This sequence belongs to the ComD family. Heterododecamer composed of 6 subunits alpha and 6 subunits beta.

It catalyses the reaction 3-sulfopyruvate + H(+) = sulfoacetaldehyde + CO2. Its pathway is cofactor biosynthesis; coenzyme M biosynthesis; sulfoacetaldehyde from phosphoenolpyruvate and sulfite: step 4/4. Inhibited by oxygen when heated in air at 80 degrees Celsius. The enzyme is reactivated by addition of dithionite. Involved in the biosynthesis of the coenzyme M (2-mercaptoethanesulfonic acid). Catalyzes the decarboxylation of sulfopyruvate to sulfoacetaldehyde. The protein is Sulfopyruvate decarboxylase subunit alpha of Methanocaldococcus jannaschii (strain ATCC 43067 / DSM 2661 / JAL-1 / JCM 10045 / NBRC 100440) (Methanococcus jannaschii).